The primary structure comprises 170 residues: Sec-independent protein translocase protein TATA, chloroplastic (170 aa).

Residues 1-61 constitute a chloroplast transit peptide; sequence MGIPVVVPVA…GGSGGDLAAV (61 aa). Over 62 to 84 the chain is Lumenal; the sequence is AASVAARPRRAGSGGGGALGCKC. A helical transmembrane segment spans residues 85-105; that stretch reads LFGLGVPELAVIAGVAALVFG. The Stromal portion of the chain corresponds to 106–170; that stretch reads PKQLPEIGRS…LEASSSKESA (65 aa). Over residues 130–139 the composition is skewed to basic and acidic residues; sequence FETELKKEPG. Residues 130-170 are disordered; the sequence is FETELKKEPGEGGDQPPPATPTAVSGGEEKGLEASSSKESA.

This sequence belongs to the TatA/E family. In terms of assembly, in thylakoid membranes, TATC and TATB form a large receptor complex, containing about eight TATC-TATB pairs, which binds the precursor protein. Twin arginine signal peptide promotes pH-triggered docking of TATA oligomers to TATC-TATB receptor complex, inducing a conformational switch of TATA that results in activation of the translocase. TATA dissociates from TATC-TATB upon completion of translocation.

It is found in the plastid. It localises to the chloroplast thylakoid membrane. Functionally, part of the twin-arginine translocation (Tat) system that transports large folded proteins containing a characteristic twin-arginine motif in their signal peptide across the thylakoid membrane. Involved in delta pH-dependent protein transport required for chloroplast development, especially thylakoid membrane formation. TATC and TATB mediate precursor recognition, whereas TATA facilitates translocation. This Zea mays (Maize) protein is Sec-independent protein translocase protein TATA, chloroplastic.